Consider the following 73-residue polypeptide: Mauriporin (73 aa).

An N-terminal signal peptide occupies residues 1–22; it reads MNKKTLLVIFFITMLIVDEVNS.

Belongs to the non-disulfide-bridged peptide (NDBP) superfamily. Long chain multifunctional peptide (group 2) family. In terms of tissue distribution, expressed by the venom gland.

The protein localises to the secreted. It is found in the target cell membrane. Functionally, amphipathic peptide that displays potent antimicrobial activities against a range of Gram-positive and Gram-negative planktonic bacteria with MIC values in the range 5 uM to 10 uM. In more details, it is active on Listeria ivanovii (MIC=5 uM), Staphylococcus epidermidis (MIC=10 uM), Salmonella enterica (MIC=5 uM), Pseudomonas aeruginosa (ATCC 27853) (MIC=5 uM), Acinetobacter baumannii (MIC=5 uM), Klebsiella pneumoniae (MIC=5 uM), Escherichia coli (MIC=7.5 uM), Salmonella typhimurium (MIC=7.5 uM), Pseudomonas aeruginosa (ATCC 9027) (MIC=10 uM). Is also able to prevent P.aeruginosa biofilm formation while showing weak hemolytic activity towards human erythrocytes. Probably induces bacterial cell death through membrane permeabilization. Moreover, shows DNA-binding activities. Also exerts potent selective cytotoxic and antiproliferative activity against three different prostate cancer cell lines (IC(50)=4.4-7.8 uM), compared to non-tumorigenic cell lines (IC(50)=59.7 uM in Vero and 62.5 uM in HUVEC cells). This peptide possibly exerts its cytotoxic activity through a necrotic mode of cell death. Only shows diminished hemolytic activity against sheep erythrocytes. Does not induce cell death through apoptosis and consequently is not acting upon an intracellular target. The chain is Mauriporin from Androctonus mauritanicus (Fat-tailed scorpion).